A 185-amino-acid polypeptide reads, in one-letter code: Ribosome-recycling factor (185 aa).

This sequence belongs to the RRF family.

The protein localises to the cytoplasm. In terms of biological role, responsible for the release of ribosomes from messenger RNA at the termination of protein biosynthesis. May increase the efficiency of translation by recycling ribosomes from one round of translation to another. This Streptococcus suis (strain 98HAH33) protein is Ribosome-recycling factor.